Reading from the N-terminus, the 118-residue chain is Ribosome-binding factor A (118 aa).

The protein belongs to the RbfA family. In terms of assembly, monomer. Binds 30S ribosomal subunits, but not 50S ribosomal subunits or 70S ribosomes.

The protein localises to the cytoplasm. Its function is as follows. One of several proteins that assist in the late maturation steps of the functional core of the 30S ribosomal subunit. Associates with free 30S ribosomal subunits (but not with 30S subunits that are part of 70S ribosomes or polysomes). Required for efficient processing of 16S rRNA. May interact with the 5'-terminal helix region of 16S rRNA. This is Ribosome-binding factor A from Thermodesulfovibrio yellowstonii (strain ATCC 51303 / DSM 11347 / YP87).